The following is an 833-amino-acid chain: ERAD-associated E3 ubiquitin-protein ligase component HRD3 (833 aa).

Residues 1–19 form the signal peptide; sequence MLLSTYLNWASVLLTIAGA. Asn-105, Asn-127, and Asn-146 each carry an N-linked (GlcNAc...) asparagine glycan. One copy of the Sel1-like 1 repeat lies at 107–143; it reads TEAMYKLSQINLWGQYGYPHNKSVAFQYLQKFNDMTS. Sel1-like repeat units lie at residues 147–184 and 185–220; these read SSAL…RLGD and LKAK…EEIK. N-linked (GlcNAc...) asparagine glycans are attached at residues Asn-424 and Asn-607. 2 Sel1-like repeats span residues 592–623 and 624–659; these read TDAA…LKFS and AQAL…EHNQ. 2 N-linked (GlcNAc...) asparagine glycosylation sites follow: Asn-688 and Asn-713. A helical transmembrane segment spans residues 752-772; the sequence is LLTMVCVLIIFAISMFFRTVA. Residues 789–818 form a disordered region; the sequence is GNALGEEGNPENENEEDDENDDEGRARARN. The span at 796 to 810 shows a compositional bias: acidic residues; that stretch reads GNPENENEEDDENDD.

It belongs to the sel-1 family. In terms of assembly, interacts with HRD1.

The protein localises to the endoplasmic reticulum membrane. In terms of biological role, component of the endoplasmic reticulum quality control (ERQC) system involved in ubiquitin-dependent degradation of missfolded endoplasmic reticulum proteins. Component of the HRD1 ubiquitin ligase complex, which is part of the ERAD-L and ERAD-M pathways responsible for the rapid degradation of soluble lumenal and membrane proteins with misfolded lumenal domains (ERAD-L), or ER-membrane proteins with misfolded transmembrane domains (ERAD-M). ERAD-L substrates are ubiquitinated through HRD1 in conjunction with the E2 ubiquitin-conjugating enzymes UBC1 and UBC7-CUE1. Ubiquitinated substrates are then removed to the cytosol via the action of the UFD1-NPL4-CDC48/p97 (UNC) AAA ATPase complex and targeted to the proteasome. ERAD-M substrates are processed by the same HRD1-HRD3 core complex, but only a subset of the other components is required for ERAD-M. Stabilizes the HRD1 ubiquitin-protein ligase. Also has a function in recruiting misfolded protein substrates. The polypeptide is ERAD-associated E3 ubiquitin-protein ligase component HRD3 (HRD3) (Candida glabrata (strain ATCC 2001 / BCRC 20586 / JCM 3761 / NBRC 0622 / NRRL Y-65 / CBS 138) (Yeast)).